The following is a 276-amino-acid chain: Large ribosomal subunit protein uL2 (276 aa).

The disordered stretch occupies residues 224-254 (VMNPVDHPHGGGEGRTSGGRHPVTPWGVPTK).

It belongs to the universal ribosomal protein uL2 family. Part of the 50S ribosomal subunit. Forms a bridge to the 30S subunit in the 70S ribosome.

In terms of biological role, one of the primary rRNA binding proteins. Required for association of the 30S and 50S subunits to form the 70S ribosome, for tRNA binding and peptide bond formation. It has been suggested to have peptidyltransferase activity; this is somewhat controversial. Makes several contacts with the 16S rRNA in the 70S ribosome. The sequence is that of Large ribosomal subunit protein uL2 from Gluconobacter oxydans (strain 621H) (Gluconobacter suboxydans).